We begin with the raw amino-acid sequence, 303 residues long: Sulfate adenylyltransferase subunit 2 (303 aa).

Positions 282 to 303 (SGRLIDHDESGSMEKKKREGYF) are disordered.

Belongs to the PAPS reductase family. CysD subfamily. As to quaternary structure, heterodimer composed of CysD, the smaller subunit, and CysN.

It catalyses the reaction sulfate + ATP + H(+) = adenosine 5'-phosphosulfate + diphosphate. The protein operates within sulfur metabolism; hydrogen sulfide biosynthesis; sulfite from sulfate: step 1/3. Its function is as follows. With CysN forms the ATP sulfurylase (ATPS) that catalyzes the adenylation of sulfate producing adenosine 5'-phosphosulfate (APS) and diphosphate, the first enzymatic step in sulfur assimilation pathway. APS synthesis involves the formation of a high-energy phosphoric-sulfuric acid anhydride bond driven by GTP hydrolysis by CysN coupled to ATP hydrolysis by CysD. The polypeptide is Sulfate adenylyltransferase subunit 2 (Maricaulis maris (strain MCS10) (Caulobacter maris)).